Here is a 327-residue protein sequence, read N- to C-terminus: Methionine import ATP-binding protein MetN (327 aa).

Residues 3–239 (VELKNIEKIY…PKHAVTKELL (237 aa)) enclose the ABC transporter domain. 36–43 (GYSGAGKS) lines the ATP pocket.

This sequence belongs to the ABC transporter superfamily. Methionine importer (TC 3.A.1.24) family. As to quaternary structure, the complex is composed of two ATP-binding proteins (MetN), two transmembrane proteins (MetI) and a solute-binding protein (MetQ).

Its subcellular location is the cell inner membrane. It carries out the reaction L-methionine(out) + ATP + H2O = L-methionine(in) + ADP + phosphate + H(+). It catalyses the reaction D-methionine(out) + ATP + H2O = D-methionine(in) + ADP + phosphate + H(+). Its function is as follows. Part of the ABC transporter complex MetNIQ involved in methionine import. Responsible for energy coupling to the transport system. In Helicobacter pylori (strain HPAG1), this protein is Methionine import ATP-binding protein MetN.